We begin with the raw amino-acid sequence, 189 residues long: T cell receptor gamma constant 2 (189 aa).

In terms of domain architecture, Ig-like spans 10 to 104 (PKPTIFLPSI…NKNGIDQEII (95 aa)). Residues Cys32 and Cys88 are joined by a disulfide bond. N-linked (GlcNAc...) asparagine glycans are attached at residues Asn66, Asn120, Asn136, Asn142, and Asn151. A helical transmembrane segment spans residues 155–177 (YYTYLLLLLKSVVYFAIITCCLL).

In terms of assembly, gamma-delta TR is a heterodimer composed of a gamma and delta chain; disulfide-linked. The gamma-delta TR is associated with the transmembrane signaling CD3 coreceptor proteins following the stoichiometry: a single gamma-delta TR heterodimer associates with one CD3D-CD3E heterodimer, one CD3G-CD3E heterodimer and one CD247 homodimer forming a stable octameric structure. Upon activation, gamma-delta TR complex associates with FCER1G to initiate intracellular signaling.

The protein localises to the cell membrane. Its function is as follows. Constant region of T cell receptor (TR) gamma chain that participates in the antigen recognition. Gamma-delta TRs recognize a variety of self and foreign non-peptide antigens frequently expressed at the epithelial boundaries between the host and external environment, including endogenous lipids presented by MH-like protein CD1D and phosphoantigens presented by butyrophilin-like molecule BTN3A1. Upon antigen recognition induces rapid, innate-like immune responses involved in pathogen clearance and tissue repair. Binding of gamma-delta TR complex to antigen triggers phosphorylation of immunoreceptor tyrosine-based activation motifs (ITAMs) in the CD3 chains by the LCK and FYN kinases, allowing the recruitment, phosphorylation, and activation of ZAP70 that facilitates phosphorylation of the scaffolding proteins LCP2 and LAT. This lead to the formation of a supramolecular signalosome that recruits the phospholipase PLCG1, resulting in calcium mobilization and ERK activation, ultimately leading to T cell expansion and differentiation into effector cells. Gamma-delta TRs are produced through somatic rearrangement of a limited repertoire of variable (V), diversity (D), and joining (J) genes. The potential diversity of gamma-delta TRs is conferred by the unique ability to rearrange (D) genes in tandem and to utilize all three reading frames. The combinatorial diversity is considerably increased by the sequence exonuclease trimming and random nucleotide (N) region additions which occur during the V-(D)-J rearrangements. This is T cell receptor gamma constant 2 from Homo sapiens (Human).